The primary structure comprises 155 residues: Endoribonuclease YbeY (155 aa).

3 residues coordinate Zn(2+): His-114, His-118, and His-124.

The protein belongs to the endoribonuclease YbeY family. Zn(2+) is required as a cofactor.

It is found in the cytoplasm. Single strand-specific metallo-endoribonuclease involved in late-stage 70S ribosome quality control and in maturation of the 3' terminus of the 16S rRNA. This is Endoribonuclease YbeY from Baumannia cicadellinicola subsp. Homalodisca coagulata.